The chain runs to 309 residues: ATP synthase gamma chain (309 aa).

This sequence belongs to the ATPase gamma chain family. In terms of assembly, F-type ATPases have 2 components, CF(1) - the catalytic core - and CF(0) - the membrane proton channel. CF(1) has five subunits: alpha(3), beta(3), gamma(1), delta(1), epsilon(1). CF(0) has three main subunits: a, b and c.

The protein localises to the cell membrane. Produces ATP from ADP in the presence of a proton gradient across the membrane. The gamma chain is believed to be important in regulating ATPase activity and the flow of protons through the CF(0) complex. This Mycobacterium sp. (strain JLS) protein is ATP synthase gamma chain.